Reading from the N-terminus, the 319-residue chain is Probable metallo-hydrolase YqjP (319 aa).

7 residues coordinate Zn(2+): His-67, His-69, Asp-71, His-72, His-165, Asp-184, and His-231.

Belongs to the metallo-beta-lactamase superfamily. The cofactor is Zn(2+).

The polypeptide is Probable metallo-hydrolase YqjP (yqjP) (Bacillus subtilis (strain 168)).